A 212-amino-acid chain; its full sequence is Pyridoxine/pyridoxamine 5'-phosphate oxidase (212 aa).

Residues 8-11 (RREY) and Lys66 each bind substrate. FMN is bound by residues 61 to 66 (RIVLLK), 76 to 77 (FT), Arg82, Lys83, and Gln105. Substrate contacts are provided by Tyr123, Arg127, and Ser131. FMN contacts are provided by residues 140-141 (QS) and Trp185. Substrate is bound at residue 191-193 (RLH). Arg195 contacts FMN.

The protein belongs to the pyridoxamine 5'-phosphate oxidase family. Homodimer. Requires FMN as cofactor.

It catalyses the reaction pyridoxamine 5'-phosphate + O2 + H2O = pyridoxal 5'-phosphate + H2O2 + NH4(+). It carries out the reaction pyridoxine 5'-phosphate + O2 = pyridoxal 5'-phosphate + H2O2. It functions in the pathway cofactor metabolism; pyridoxal 5'-phosphate salvage; pyridoxal 5'-phosphate from pyridoxamine 5'-phosphate: step 1/1. The protein operates within cofactor metabolism; pyridoxal 5'-phosphate salvage; pyridoxal 5'-phosphate from pyridoxine 5'-phosphate: step 1/1. Catalyzes the oxidation of either pyridoxine 5'-phosphate (PNP) or pyridoxamine 5'-phosphate (PMP) into pyridoxal 5'-phosphate (PLP). This Shewanella oneidensis (strain ATCC 700550 / JCM 31522 / CIP 106686 / LMG 19005 / NCIMB 14063 / MR-1) protein is Pyridoxine/pyridoxamine 5'-phosphate oxidase.